The chain runs to 205 residues: Thymidylate kinase (205 aa).

13–20 is a binding site for ATP; that stretch reads GIDGSGKS.

This sequence belongs to the thymidylate kinase family.

The catalysed reaction is dTMP + ATP = dTDP + ADP. Its function is as follows. Phosphorylation of dTMP to form dTDP in both de novo and salvage pathways of dTTP synthesis. The chain is Thymidylate kinase from Leptospira borgpetersenii serovar Hardjo-bovis (strain L550).